We begin with the raw amino-acid sequence, 221 residues long: MVKTWDEFLEQEAKQPYFIELMKAVSEAREEGNVYPSEEDMFSCFRLCPYDKVKVVILGQDPYHGPGQAHGLSFSVQKDVRIPPSLRNIYKELKSDLDIDPANHGYLAKWAEQGVLLMNTSWSVEEGKAGSHKKLGWATFTDHVLEELNNYDKPLVFILWGNHAIKAASGITNPKHLLIKGVHPSPLAASRGFFGSKPFSKTNEFLKENNRTPIDWDLNSK.

Aspartate 61 acts as the Proton acceptor in catalysis.

It belongs to the uracil-DNA glycosylase (UDG) superfamily. UNG family.

The protein resides in the cytoplasm. It catalyses the reaction Hydrolyzes single-stranded DNA or mismatched double-stranded DNA and polynucleotides, releasing free uracil.. In terms of biological role, excises uracil residues from the DNA which can arise as a result of misincorporation of dUMP residues by DNA polymerase or due to deamination of cytosine. The polypeptide is Uracil-DNA glycosylase 1 (Listeria innocua serovar 6a (strain ATCC BAA-680 / CLIP 11262)).